The primary structure comprises 321 residues: MKTPWVEKYRPQTLDDVVGQEQIVGRLKRYVEEKSLPNIMFTGFAGVGKTTCALALAKSLLGEYWQQNFLELNASDARGIDTVRNEIKSFCKLKAVGAPFRIIFLDEVDNMTKDAQQALRREMEMYTKTSSFILSCNYSSKIIDPIQSRCAIFRFSPIKAANIIKRLKYIASEEGIEAEQSALENIVYFTQGDMRKSINILQASTTTENTVTEEAVYDVISRAKPKDVRKIINKALNHDFMEARDLLRDIMIIEGVSGDDLITQFYQEVAQMTQEELIPEVEFIKLMEYMSECDYRIREGSNPRLQLEALLSKFLLVKQDA.

Residue 43–50 (GFAGVGKT) participates in ATP binding.

The protein belongs to the activator 1 small subunits family. RfcS subfamily. In terms of assembly, heteromultimer composed of small subunits (RfcS) and large subunits (RfcL).

In terms of biological role, part of the RFC clamp loader complex which loads the PCNA sliding clamp onto DNA. The sequence is that of Replication factor C small subunit from Methanosphaera stadtmanae (strain ATCC 43021 / DSM 3091 / JCM 11832 / MCB-3).